Reading from the N-terminus, the 41-residue chain is Peptide Hact-SCRiP1 (41 aa).

4 cysteine pairs are disulfide-bonded: Cys-5–Cys-37, Cys-12–Cys-31, Cys-19–Cys-38, and Cys-26–Cys-39.

In terms of tissue distribution, expressed in tentacles.

It is found in the nematocyst. Its subcellular location is the secreted. In terms of biological role, peptide with unknown function. Does not exhibit any effect on human ion channel TRPV1 in a Xenopus laevis oocytes assay. The polypeptide is Peptide Hact-SCRiP1 (Heliofungia actiniformis (Mushroom coral)).